Here is a 253-residue protein sequence, read N- to C-terminus: Non-homologous end joining protein Ku (253 aa).

The 184-residue stretch at 9-192 (ISFGLVNIPV…EITEEELELA (184 aa)) folds into the Ku domain.

This sequence belongs to the prokaryotic Ku family. In terms of assembly, homodimer. Interacts with LigD.

With LigD forms a non-homologous end joining (NHEJ) DNA repair enzyme, which repairs dsDNA breaks with reduced fidelity. Binds linear dsDNA with 5'- and 3'- overhangs but not closed circular dsDNA nor ssDNA. Recruits and stimulates the ligase activity of LigD. The protein is Non-homologous end joining protein Ku of Archaeoglobus fulgidus (strain ATCC 49558 / DSM 4304 / JCM 9628 / NBRC 100126 / VC-16).